Consider the following 833-residue polypeptide: Leucine--tRNA ligase (833 aa).

The 'HIGH' region signature appears at 41–52 (PYPSGAGLHVGH). The 'KMSKS' region signature appears at 610–614 (KMSKS). Lys-613 contacts ATP.

This sequence belongs to the class-I aminoacyl-tRNA synthetase family.

It is found in the cytoplasm. The enzyme catalyses tRNA(Leu) + L-leucine + ATP = L-leucyl-tRNA(Leu) + AMP + diphosphate. In Streptococcus pyogenes serotype M49 (strain NZ131), this protein is Leucine--tRNA ligase.